A 351-amino-acid chain; its full sequence is Dihydroorotate dehydrogenase (quinone) (351 aa).

FMN is bound by residues 65-69 (AGLDK) and Thr89. Lys69 is a substrate binding site. Residue 114–118 (NRLGF) coordinates substrate. FMN-binding residues include Asn150 and Asn183. Asn183 is a substrate binding site. The active-site Nucleophile is the Ser186. Residue Asn188 coordinates substrate. FMN is bound by residues Lys228 and Thr256. Residue 257 to 258 (NT) participates in substrate binding. Residues Gly279, Gly308, and 329 to 330 (YT) contribute to the FMN site.

Belongs to the dihydroorotate dehydrogenase family. Type 2 subfamily. Monomer. FMN serves as cofactor.

The protein resides in the cell membrane. The enzyme catalyses (S)-dihydroorotate + a quinone = orotate + a quinol. Its pathway is pyrimidine metabolism; UMP biosynthesis via de novo pathway; orotate from (S)-dihydroorotate (quinone route): step 1/1. Functionally, catalyzes the conversion of dihydroorotate to orotate with quinone as electron acceptor. This Acidovorax ebreus (strain TPSY) (Diaphorobacter sp. (strain TPSY)) protein is Dihydroorotate dehydrogenase (quinone).